The primary structure comprises 347 residues: Dual specificity mitogen-activated protein kinase kinase 3 (347 aa).

Met-1 is subject to N-acetylmethionine. Residues 1-11 (MESPAASPPAS) are compositionally biased toward pro residues. Positions 1-45 (MESPAASPPASLPQTKGKSKRKKDLRISCVSKPPVSNPTPPRNLD) are disordered. The residue at position 3 (Ser-3) is a Phosphoserine. Positions 64 to 325 (LVTISELGRG…YLELMEHPFF (262 aa)) constitute a Protein kinase domain. ATP-binding positions include 70 to 78 (LGRGAYGVV) and Lys-93. The active-site Proton acceptor is the Asp-190. Residue Ser-218 is modified to Phosphoserine. Thr-222 is modified (phosphothreonine).

The protein belongs to the protein kinase superfamily. STE Ser/Thr protein kinase family. MAP kinase kinase subfamily. As to quaternary structure, component of a signaling complex containing at least AKAP13, PKN1, MAPK14, ZAK and MAP2K3. Within this complex, AKAP13 interacts directly with PKN1, which in turn recruits MAPK14, MAP2K3 and ZAK. Binds to DYRK1B/MIRK and increases its kinase activity. Part of a complex with MAP3K3, RAC1 and CCM2. Interacts with ARRB1. Autophosphorylated. Phosphorylation on Ser-218 and Thr-222 by MAP kinase kinase kinases positively regulates the kinase activity. Phosphorylated by TAOK2.

The enzyme catalyses L-seryl-[protein] + ATP = O-phospho-L-seryl-[protein] + ADP + H(+). It catalyses the reaction L-threonyl-[protein] + ATP = O-phospho-L-threonyl-[protein] + ADP + H(+). It carries out the reaction L-tyrosyl-[protein] + ATP = O-phospho-L-tyrosyl-[protein] + ADP + H(+). With respect to regulation, activated by dual phosphorylation on Ser-218 and Thr-222. Functionally, dual specificity kinase. Is activated by cytokines and environmental stress in vivo. Catalyzes the concomitant phosphorylation of a threonine and a tyrosine residue in the MAP kinase p38. Part of a signaling cascade that begins with the activation of the adrenergic receptor ADRA1B and leads to the activation of MAPK14. The sequence is that of Dual specificity mitogen-activated protein kinase kinase 3 (Map2k3) from Mus musculus (Mouse).